We begin with the raw amino-acid sequence, 366 residues long: Histidinol-phosphate aminotransferase 2 (366 aa).

Residues 1-11 show a composition bias toward polar residues; sequence MQVKDQLSSLQ. Residues 1–21 are disordered; sequence MQVKDQLSSLQPYKPGKSPEQ. N6-(pyridoxal phosphate)lysine is present on Lys222.

The protein belongs to the class-II pyridoxal-phosphate-dependent aminotransferase family. Histidinol-phosphate aminotransferase subfamily. In terms of assembly, homodimer. It depends on pyridoxal 5'-phosphate as a cofactor.

The enzyme catalyses L-histidinol phosphate + 2-oxoglutarate = 3-(imidazol-4-yl)-2-oxopropyl phosphate + L-glutamate. The protein operates within amino-acid biosynthesis; L-histidine biosynthesis; L-histidine from 5-phospho-alpha-D-ribose 1-diphosphate: step 7/9. The chain is Histidinol-phosphate aminotransferase 2 (hisC2) from Bacillus cereus (strain ATCC 14579 / DSM 31 / CCUG 7414 / JCM 2152 / NBRC 15305 / NCIMB 9373 / NCTC 2599 / NRRL B-3711).